Consider the following 278-residue polypeptide: Potassium/proton antiporter CemA (278 aa).

A run of 4 helical transmembrane segments spans residues 60–80, 163–183, 201–221, and 239–259; these read YLVL…SLVF, ILAF…IAVL, FLII…GWEV, and IFLF…YWIF.

Belongs to the CemA family.

It localises to the plastid. The protein resides in the chloroplast inner membrane. The enzyme catalyses K(+)(in) + H(+)(out) = K(+)(out) + H(+)(in). Contributes to K(+)/H(+) antiport activity by supporting proton efflux to control proton extrusion and homeostasis in chloroplasts in a light-dependent manner to modulate photosynthesis. Prevents excessive induction of non-photochemical quenching (NPQ) under continuous-light conditions. Indirectly promotes efficient inorganic carbon uptake into chloroplasts. The polypeptide is Potassium/proton antiporter CemA (Guillardia theta (Cryptophyte)).